Consider the following 121-residue polypeptide: UPF0102 protein BVU_1879 (121 aa).

Belongs to the UPF0102 family.

This Phocaeicola vulgatus (strain ATCC 8482 / DSM 1447 / JCM 5826 / CCUG 4940 / NBRC 14291 / NCTC 11154) (Bacteroides vulgatus) protein is UPF0102 protein BVU_1879.